Reading from the N-terminus, the 236-residue chain is Ribosome assembly factor MRT4 (236 aa).

This sequence belongs to the universal ribosomal protein uL10 family. As to quaternary structure, associates with the pre-60S ribosomal particle.

It is found in the nucleus. The protein resides in the nucleolus. The protein localises to the cytoplasm. Its function is as follows. Component of the ribosome assembly machinery. Nuclear paralog of the ribosomal protein P0, it binds pre-60S subunits at an early stage of assembly in the nucleolus, and is replaced by P0 in cytoplasmic pre-60S subunits and mature 80S ribosomes. This Saccharomyces cerevisiae (strain ATCC 204508 / S288c) (Baker's yeast) protein is Ribosome assembly factor MRT4.